The following is a 261-amino-acid chain: Zinc finger protein 664 (261 aa).

9 C2H2-type zinc fingers span residues 3-25, 31-53, 59-81, 87-109, 115-137, 143-165, 171-193, 199-221, and 227-249; these read YKCP…QKIH, HKCD…WRDH, YKCD…KKIH, YKCY…MRVH, YVCS…QRVH, FKCE…QRVH, YKCY…QRVH, YRCC…QRVH, and FKCD…QRVH. Residue lysine 257 forms a Glycyl lysine isopeptide (Lys-Gly) (interchain with G-Cter in SUMO2) linkage.

This sequence belongs to the krueppel C2H2-type zinc-finger protein family.

Its subcellular location is the nucleus. May be involved in transcriptional regulation. This chain is Zinc finger protein 664 (ZNF664), found in Pongo abelii (Sumatran orangutan).